The chain runs to 396 residues: Cathepsin E (396 aa).

An N-terminal signal peptide occupies residues 1-19 (MKTLLLLLLVLLELGEAQG). A propeptide spans 20–53 (SLHRVPLRRHPSLKKKLRARSQLSEFWKSHNLDM) (activation peptide). Positions 78 to 396 (YFGTISIGSP…NRVGLAPAVP (319 aa)) constitute a Peptidase A1 domain. Residue N90 is glycosylated (N-linked (GlcNAc...) asparagine). D96 is a catalytic residue. 2 cysteine pairs are disulfide-bonded: C109-C114 and C272-C276. D281 is an active-site residue. A disulfide bridge links C314 with C351.

It belongs to the peptidase A1 family. As to quaternary structure, homodimer; disulfide-linked. Post-translationally, glycosylated. The nature of the carbohydrate chain varies between cell types. In fibroblasts, the proenzyme contains a high mannose-type oligosaccharide, while the mature enzyme contains a complex-type oligosaccharide. In erythrocyte membranes, both the proenzyme and mature enzyme contain a complex-type oligosaccharide. In terms of processing, two forms are produced by autocatalytic cleavage, form I begins at Ile-54, form II begins at Thr-57. Expressed abundantly in the stomach, the Clara cells of the lung and activated B-lymphocytes, and at lower levels in lymph nodes, skin and spleen. Not expressed in resting B-lymphocytes.

It is found in the endosome. It catalyses the reaction Similar to cathepsin D, but slightly broader specificity.. Functionally, may have a role in immune function. Probably involved in the processing of antigenic peptides during MHC class II-mediated antigen presentation. May play a role in activation-induced lymphocyte depletion in the thymus, and in neuronal degeneration and glial cell activation in the brain. The sequence is that of Cathepsin E (CTSE) from Homo sapiens (Human).